The chain runs to 389 residues: Apoptosis inhibitor U19 (389 aa).

Belongs to the beta-herpesvirinae UL38 protein family. Interacts with host MDM2; this interaction leads to the stabilization of host TP53.

It localises to the host cytoplasm. It is found in the host nucleus. Functionally, plays a role in the inhibition of host apoptosis to facilitate efficient viral replication. Promotes stabilization and inactivation of host TP53 through interaction with host MDM2. The chain is Apoptosis inhibitor U19 (U19) from Human herpesvirus 6A (strain Uganda-1102) (HHV-6 variant A).